The chain runs to 332 residues: Ketol-acid reductoisomerase (NADP(+)) (332 aa).

Positions 1 to 182 (MAQVWKDAEI…GSARAGLIKT (182 aa)) constitute a KARI N-terminal Rossmann domain. NADP(+)-binding positions include 25 to 28 (YGIQ), Lys-48, Ser-53, and 83 to 86 (DMIQ). His-108 is an active-site residue. Gly-134 is a binding site for NADP(+). One can recognise a KARI C-terminal knotted domain in the interval 183-329 (TFKEEVETDW…RKMRKMMWPD (147 aa)). The Mg(2+) site is built by Asp-191, Glu-195, Glu-227, and Glu-231. Position 252 (Ser-252) interacts with substrate.

The protein belongs to the ketol-acid reductoisomerase family. Mg(2+) serves as cofactor.

The enzyme catalyses (2R)-2,3-dihydroxy-3-methylbutanoate + NADP(+) = (2S)-2-acetolactate + NADPH + H(+). It catalyses the reaction (2R,3R)-2,3-dihydroxy-3-methylpentanoate + NADP(+) = (S)-2-ethyl-2-hydroxy-3-oxobutanoate + NADPH + H(+). It participates in amino-acid biosynthesis; L-isoleucine biosynthesis; L-isoleucine from 2-oxobutanoate: step 2/4. The protein operates within amino-acid biosynthesis; L-valine biosynthesis; L-valine from pyruvate: step 2/4. Its function is as follows. Involved in the biosynthesis of branched-chain amino acids (BCAA). Catalyzes an alkyl-migration followed by a ketol-acid reduction of (S)-2-acetolactate (S2AL) to yield (R)-2,3-dihydroxy-isovalerate. In the isomerase reaction, S2AL is rearranged via a Mg-dependent methyl migration to produce 3-hydroxy-3-methyl-2-ketobutyrate (HMKB). In the reductase reaction, this 2-ketoacid undergoes a metal-dependent reduction by NADPH to yield (R)-2,3-dihydroxy-isovalerate. This Cenarchaeum symbiosum (strain A) protein is Ketol-acid reductoisomerase (NADP(+)).